The primary structure comprises 464 residues: Interstitial collagenase A (464 aa).

An N-terminal signal peptide occupies residues 1 to 17; sequence MPSLPLLLLLWAASSYS. The propeptide at 18-96 is activation peptide; the sequence is FPVFHNGDRQ…PRCGVPDVAP (79 aa). Positions 87-94 match the Cysteine switch motif; that stretch reads PRCGVPDV. Cysteine 89 is a binding site for Zn(2+). Residues 95–274 form a metalloprotease region; it reads APYAITHNNP…IQPTGATTPH (180 aa). Aspartate 155 lines the Ca(2+) pocket. Positions 165 and 167 each coordinate Zn(2+). Ca(2+)-binding residues include aspartate 172 and glycine 173. Histidine 180 contacts Zn(2+). 3 residues coordinate Ca(2+): glycine 187, glycine 189, and aspartate 191. Histidine 193 contributes to the Zn(2+) binding site. Aspartate 195 and glutamate 198 together coordinate Ca(2+). An N-linked (GlcNAc...) asparagine glycan is attached at asparagine 202. Histidine 215 serves as a coordination point for Zn(2+). The active site involves glutamate 216. Zn(2+)-binding residues include histidine 219 and histidine 225. Hemopexin repeat units lie at residues 273 to 322 and 323 to 369; these read PHPC…WPNL and PVKL…FGFP. Cysteine 276 and cysteine 464 are disulfide-bonded. Aspartate 283 lines the Ca(2+) pocket. A glycan (N-linked (GlcNAc...) asparagine) is linked at asparagine 371. 2 Hemopexin repeats span residues 372-420 and 421-464; these read VTHI…FPGI and DDKV…WFNC. Residues aspartate 376 and aspartate 425 each coordinate Ca(2+).

It belongs to the peptidase M10A family. It depends on Ca(2+) as a cofactor. Zn(2+) serves as cofactor.

Its subcellular location is the secreted. It localises to the extracellular space. The protein localises to the extracellular matrix. It catalyses the reaction Cleavage of the triple helix of collagen at about three-quarters of the length of the molecule from the N-terminus, at 775-Gly-|-Ile-776 in the alpha1(I) chain. Cleaves synthetic substrates and alpha-macroglobulins at bonds where P1' is a hydrophobic residue.. Can be activated without removal of the activation peptide. Its function is as follows. Cleaves collagens of types I, II, and III at one site in the helical domain. Also cleaves collagens of types VII and X. Able to degrade synthetic peptides and type I and II fibrillar collagen. The polypeptide is Interstitial collagenase A (Mmp1a) (Mus musculus (Mouse)).